The sequence spans 306 residues: MNLKQEKIAVLLGGTSAEREVSLNSGKAVLEALLKQGYNAHPIDPKEYNVANLKKDGFNRAFNILHGRGGEDGTMQGLLEQIGLPYTGCGVMASALTMDKMRTKMLWKAFGLPVADMKVVTRETFSELDPQAVVAKLGLPLMVKPSLEGSSVGLTKVKAVEELKSAVEYALKFDNTILIEEWLAGDELTVPVLDNQVLPAIRIVPEGEFYDYEAKYISDNTQYFCPAGLTPEREQALSTLVKRAYDAVGCRGWSRIDVMCDAKGNFRLVEVNTNPGMTSHSLFPKSAATVGISFEQLVVKILELSL.

Residues Glu18 and Ser150 contribute to the active site. The ATP-grasp domain occupies 104-303 (KMLWKAFGLP…FEQLVVKILE (200 aa)). 134–189 (VAKLGLPLMVKPSLEGSSVGLTKVKAVEELKSAVEYALKFDNTILIEEWLAGDELT) contributes to the ATP binding site. Asp257, Glu270, and Asn272 together coordinate Mg(2+). The active site involves Ser281.

Belongs to the D-alanine--D-alanine ligase family. Mg(2+) is required as a cofactor. The cofactor is Mn(2+).

Its subcellular location is the cytoplasm. It catalyses the reaction 2 D-alanine + ATP = D-alanyl-D-alanine + ADP + phosphate + H(+). Its pathway is cell wall biogenesis; peptidoglycan biosynthesis. Functionally, cell wall formation. This chain is D-alanine--D-alanine ligase, found in Haemophilus influenzae (strain ATCC 51907 / DSM 11121 / KW20 / Rd).